The chain runs to 242 residues: Sugar fermentation stimulation protein homolog (242 aa).

It belongs to the SfsA family.

This Rippkaea orientalis (strain PCC 8801 / RF-1) (Cyanothece sp. (strain PCC 8801)) protein is Sugar fermentation stimulation protein homolog.